Consider the following 271-residue polypeptide: Short chain dehydrogenase asqE (271 aa).

Residues Ile-22, Asp-70, and Asn-99 each coordinate NADP(+). Catalysis depends on proton donor residues Ser-152 and Ser-153. NADP(+) contacts are provided by Tyr-167, Lys-171, and Thr-203. Tyr-167 (proton acceptor) is an active-site residue. Lys-171 acts as the Lowers pKa of active site Tyr in catalysis.

The protein belongs to the short-chain dehydrogenases/reductases (SDR) family.

It catalyses the reaction a primary alcohol + NAD(+) = an aldehyde + NADH + H(+). It carries out the reaction a secondary alcohol + NAD(+) = a ketone + NADH + H(+). Its pathway is secondary metabolite biosynthesis. It functions in the pathway alkaloid biosynthesis. It participates in mycotoxin biosynthesis. Its function is as follows. Short chain dehydrogenase; part of the gene cluster that mediates the biosynthesis of the aspoquinolone mycotoxins. The role of asqE within the aspoquinolone pathway has still to be determined. The first step of the pathway is catalyzed by the nonribosomal peptide synthetase asqK that condenses anthranilic acid and O-methyl-L-tyrosine to produce 4'-methoxycyclopeptin. 4'-methoxycyclopeptin is then converted to 4'-methoxydehydrocyclopeptin by the ketoglutarate-dependent dioxygenase asqJ. AsqJ also converts its first product 4'-methoxydehydrocyclopeptin to 4'-methoxycyclopenin. The following conversion of 4'-methoxycyclopenin into 4'-methoxyviridicatin is catalyzed by the cyclopenase asqI. 4'-methoxyviridicatin is the precursor of quinolone natural products, and is further converted to quinolinone B. The prenyltransferase asqH1 then catalyzes the canonical Friedel-Crafts alkylation of quinolinone B with dimethylallyl cation to yield dimethylallyl quinolone, which is subjected to FAD-dependent dehydrogenation by the FAD-linked oxidoreductase asqF to yield conjugated aryl diene. The delta(3') double bond then serves as the site of the second alkylation with DMAPP catalyzed by the prenyltransferase asqH2 to yield a carbenium ion intermediate, which can be attacked by H(2)O to yield a styrenyl quinolone containing a C3'-hydroxyprenyl chain. The FAD-dependent monooxygenase asqG performs epoxidation of the terminal C7'-C8' olefin. Finally, after dehydratation of the epoxide at C3 by asqC, the quinolone epoxide rearrangement protein asqO catalyzes an enzymatic 3-exo-tet cyclization to yield the cyclopropyl-THF ring system in aspoquinolone. The sequence is that of Short chain dehydrogenase asqE from Emericella nidulans (strain FGSC A4 / ATCC 38163 / CBS 112.46 / NRRL 194 / M139) (Aspergillus nidulans).